We begin with the raw amino-acid sequence, 423 residues long: Serine hydroxymethyltransferase (423 aa).

119–121 (GHI) is a binding site for (6S)-5,6,7,8-tetrahydrofolate. An N6-(pyridoxal phosphate)lysine modification is found at K225.

It belongs to the SHMT family. In terms of assembly, homodimer. The cofactor is pyridoxal 5'-phosphate.

It is found in the cytoplasm. The catalysed reaction is (6R)-5,10-methylene-5,6,7,8-tetrahydrofolate + glycine + H2O = (6S)-5,6,7,8-tetrahydrofolate + L-serine. The protein operates within one-carbon metabolism; tetrahydrofolate interconversion. It participates in amino-acid biosynthesis; glycine biosynthesis; glycine from L-serine: step 1/1. Functionally, catalyzes the reversible interconversion of serine and glycine with tetrahydrofolate (THF) serving as the one-carbon carrier. Also exhibits THF-independent aldolase activity toward beta-hydroxyamino acids, producing glycine and aldehydes, via a retro-aldol mechanism. The polypeptide is Serine hydroxymethyltransferase (Methanocella arvoryzae (strain DSM 22066 / NBRC 105507 / MRE50)).